The following is a 144-amino-acid chain: 3-hydroxyacyl-[acyl-carrier-protein] dehydratase FabZ (144 aa).

His-47 is a catalytic residue.

The protein belongs to the thioester dehydratase family. FabZ subfamily.

The protein resides in the cytoplasm. The catalysed reaction is a (3R)-hydroxyacyl-[ACP] = a (2E)-enoyl-[ACP] + H2O. Functionally, involved in unsaturated fatty acids biosynthesis. Catalyzes the dehydration of short chain beta-hydroxyacyl-ACPs and long chain saturated and unsaturated beta-hydroxyacyl-ACPs. The chain is 3-hydroxyacyl-[acyl-carrier-protein] dehydratase FabZ from Nitrosomonas eutropha (strain DSM 101675 / C91 / Nm57).